A 292-amino-acid chain; its full sequence is tRNA pseudouridine synthase B (292 aa).

Asp38 (nucleophile) is an active-site residue.

This sequence belongs to the pseudouridine synthase TruB family. Type 1 subfamily.

It carries out the reaction uridine(55) in tRNA = pseudouridine(55) in tRNA. In terms of biological role, responsible for synthesis of pseudouridine from uracil-55 in the psi GC loop of transfer RNAs. The polypeptide is tRNA pseudouridine synthase B (Streptococcus pneumoniae serotype 2 (strain D39 / NCTC 7466)).